Reading from the N-terminus, the 121-residue chain is MKRINFSRAKQRALRAKRLHVKIRNLQLAANKPVLVITKTNAHIWAQLICYNKNITLASSSSVQLDLQNGNKDNARLVGVDIAKKALAQGFKQVIFNKNGAKYHGRIKALADAAREAGLEF.

The protein belongs to the universal ribosomal protein uL18 family. As to quaternary structure, part of the 50S ribosomal subunit; part of the 5S rRNA/L5/L18/L25 subcomplex. Contacts the 5S and 23S rRNAs.

In terms of biological role, this is one of the proteins that bind and probably mediate the attachment of the 5S RNA into the large ribosomal subunit, where it forms part of the central protuberance. The chain is Large ribosomal subunit protein uL18 from Ureaplasma parvum serovar 3 (strain ATCC 27815 / 27 / NCTC 11736).